We begin with the raw amino-acid sequence, 182 residues long: ATP synthase subunit b, chloroplastic (182 aa).

A helical membrane pass occupies residues 33-51 (VLNIAILLSGVIYLGRNFL).

It belongs to the ATPase B chain family. As to quaternary structure, F-type ATPases have 2 components, F(1) - the catalytic core - and F(0) - the membrane proton channel. F(1) has five subunits: alpha(3), beta(3), gamma(1), delta(1), epsilon(1). F(0) has four main subunits: a(1), b(1), b'(1) and c(10-14). The alpha and beta chains form an alternating ring which encloses part of the gamma chain. F(1) is attached to F(0) by a central stalk formed by the gamma and epsilon chains, while a peripheral stalk is formed by the delta, b and b' chains.

It localises to the plastid. The protein localises to the chloroplast thylakoid membrane. Its function is as follows. F(1)F(0) ATP synthase produces ATP from ADP in the presence of a proton or sodium gradient. F-type ATPases consist of two structural domains, F(1) containing the extramembraneous catalytic core and F(0) containing the membrane proton channel, linked together by a central stalk and a peripheral stalk. During catalysis, ATP synthesis in the catalytic domain of F(1) is coupled via a rotary mechanism of the central stalk subunits to proton translocation. In terms of biological role, component of the F(0) channel, it forms part of the peripheral stalk, linking F(1) to F(0). The protein is ATP synthase subunit b, chloroplastic of Guillardia theta (Cryptophyte).